We begin with the raw amino-acid sequence, 391 residues long: Phosphoglycerate kinase (391 aa).

Substrate is bound by residues Asp21–Asn23, Arg36, His59–Arg62, Arg114, and Arg147. Residues Lys198, Glu315, and Gly344–Thr347 contribute to the ATP site.

The protein belongs to the phosphoglycerate kinase family. As to quaternary structure, monomer.

It localises to the cytoplasm. It catalyses the reaction (2R)-3-phosphoglycerate + ATP = (2R)-3-phospho-glyceroyl phosphate + ADP. It functions in the pathway carbohydrate degradation; glycolysis; pyruvate from D-glyceraldehyde 3-phosphate: step 2/5. The sequence is that of Phosphoglycerate kinase from Haemophilus ducreyi (strain 35000HP / ATCC 700724).